A 286-amino-acid chain; its full sequence is Polyamine aminopropyltransferase (286 aa).

The PABS domain occupies 5–238 (TMWHETLHDQ…GIMTFAWATD (234 aa)). Q33 provides a ligand contact to S-methyl-5'-thioadenosine. Residues H64 and D88 each coordinate spermidine. S-methyl-5'-thioadenosine-binding positions include E108 and 140-141 (DG). D158 (proton acceptor) is an active-site residue. 158-161 (DCTD) lines the spermidine pocket. An S-methyl-5'-thioadenosine-binding site is contributed by P165.

The protein belongs to the spermidine/spermine synthase family. In terms of assembly, homodimer or homotetramer.

Its subcellular location is the cytoplasm. The enzyme catalyses S-adenosyl 3-(methylsulfanyl)propylamine + putrescine = S-methyl-5'-thioadenosine + spermidine + H(+). The protein operates within amine and polyamine biosynthesis; spermidine biosynthesis; spermidine from putrescine: step 1/1. Functionally, catalyzes the irreversible transfer of a propylamine group from the amino donor S-adenosylmethioninamine (decarboxy-AdoMet) to putrescine (1,4-diaminobutane) to yield spermidine. The sequence is that of Polyamine aminopropyltransferase from Salmonella arizonae (strain ATCC BAA-731 / CDC346-86 / RSK2980).